A 415-amino-acid polypeptide reads, in one-letter code: Gamma-glutamyl phosphate reductase (415 aa).

This sequence belongs to the gamma-glutamyl phosphate reductase family.

It localises to the cytoplasm. The catalysed reaction is L-glutamate 5-semialdehyde + phosphate + NADP(+) = L-glutamyl 5-phosphate + NADPH + H(+). It functions in the pathway amino-acid biosynthesis; L-proline biosynthesis; L-glutamate 5-semialdehyde from L-glutamate: step 2/2. Functionally, catalyzes the NADPH-dependent reduction of L-glutamate 5-phosphate into L-glutamate 5-semialdehyde and phosphate. The product spontaneously undergoes cyclization to form 1-pyrroline-5-carboxylate. This chain is Gamma-glutamyl phosphate reductase, found in Mycolicibacterium vanbaalenii (strain DSM 7251 / JCM 13017 / BCRC 16820 / KCTC 9966 / NRRL B-24157 / PYR-1) (Mycobacterium vanbaalenii).